A 55-amino-acid chain; its full sequence is uncharacterized protein (55 aa).

The segment at 1-25 (MKNNDKKKEVQRKYREEIKKKKQKN) is disordered. The helical transmembrane segment at 35–55 (TIIVVTIIVLFIFFTYTLQGF) threads the bilayer.

The protein localises to the membrane. This is an uncharacterized protein from Bacillus subtilis (strain 168).